The primary structure comprises 728 residues: Ubiquitin carboxyl-terminal hydrolase BAP1 (728 aa).

The UCH catalytic domain occupies Gly-4 to Pro-235. An Arg-finger motif motif is present at residues Arg-56 to Arg-60. The active-site Nucleophile is Cys-91. Residue His-169 is the Proton donor of the active site. The segment at Thr-273 to Lys-333 is disordered. A Phosphoserine modification is found at Ser-292. The HBM-like motif motif lies at Asn-363–Tyr-366. 2 positions are modified to phosphoserine: Ser-369 and Ser-395. Disordered regions lie at residues Gln-372 to Leu-436 and Ser-463 to Thr-523. Positions Ser-395–Val-408 are enriched in acidic residues. Polar residues-rich tracts occupy residues Ser-427–Leu-436 and Thr-479–Thr-523. A Phosphothreonine modification is found at Thr-492. 3 positions are modified to phosphoserine: Ser-520, Ser-536, and Ser-584. The interval Leu-574–Gly-623 is disordered. Positions Ser-581–Gly-596 are enriched in low complexity. The segment at Ser-595–Ser-720 is interaction with BRCA1. The segment covering Leu-597–Gly-613 has biased composition (basic and acidic residues). The stretch at Lys-629–Lys-660 forms a coiled coil. The tract at residues Glu-641–Gly-685 is interaction with YY1. Positions Asn-669 to Val-697 constitute a ULD domain. The segment at Arg-698–Arg-700 is interaction with nucleosomal DNA forming a DNA clamp with ASXL1. A Classical bipartite Nuclear localization signal (NLS) motif is present at residues Arg-698–Arg-721. Positions Gly-702 to Gln-728 are disordered. A positively charged C-terminal extension (CTE) region spans residues Arg-712–Gln-728. Positions Arg-716 to Arg-721 match the Nuclear localization signal motif. Residues Arg-716–Tyr-723 carry the Non-classical PY-nuclear localization signal (PY-NLS) motif.

Belongs to the peptidase C12 family. BAP1 subfamily. As to quaternary structure, core component of the polycomb repressive deubiquitinase (PR-DUB) complex, at least composed of BAP1, one of ASXL1, ASXL2 or (probably) ASXL3, and one of MBD5 or MBD6. The PR-DUB core associates with a number of accessory proteins, including FOXK1, FOXK2, KDM1B, HCFC1, YY1 and OGT; KDM1B specifically associates with ASXL2 PR-DUB complexes. The BAP1 deubiquitinase activity is not required for PR-DUB assembly. Homodimerizes (via coiled-coil hinge-region between the UCH and ULD domains) to mediate assembly of 2 copies of the BAP1-ASXL heterodimer into a bisymmetric tetramer; dimerization enhances association with nucleosomes. The PR-DUB complex associates with nucleosomes to mediate deubiquitination of 'lys-120' of histone H2AK118ub1 substrates; the association requires the positively charged C-terminal tail of BAP1. Interacts (via ULD domain) with ASXL1 (via DEUBAD domain); the interaction is direct and forms a ubiquitin binding cleft. The interaction with ASXL1 stabilizes BAP1 but is not required for nucleosome binding. Associates (via C-terminus) with nucleosome and chromatosome complexes through direct interaction with DNA and the histone3/4 dimer; this association displaces the histone-2A C-terminal tail, extending and orienting the H2AK118ub1 substrate towards the BAP1 deubiquitinase active site. Also interacts (via arginine finger) directly with the histone H2A-H2B acidic patch; this interaction is not critical for nucleosome-chromatosome association but may play a role in orienting the H2AK118ub1 substrate towards the PR-DUB complex active site. Interacts with BRCA1 (via the RING finger). Interacts (via HBM-like motif) with HCFC1. Interacts (via a C-terminal region overlapping the ULD domain) with YY1; the interaction is direct and requires the interaction with HCFC1. Interacts (when phosphorylated at Thr-492) with FOXK1. Interacts (when phosphorylated at Thr-492) with FOXK2; leading to recruitment of the PR-DUB complex and repression of FOXK2 target genes. Interacts (via non-classical PY-NLS) with TNPO1/transportin-1 (via HEAT repeats 8-12); the interaction is direct, mediates BAP1 nuclear localization and disrupts BAP1 homodimerization. Interacts (via C-terminus) with KPNA1/importin alpha5 and KPNA2/importin alpha1; these interactions can contribute to BAP1 nuclear localization but are less important than the interaction with TNPO1/transportin-1. The interaction with TNPO1/transportin-1 disrupts homodimerization and blocks ubiquitination by UBE2O. In terms of processing, ubiquitinated: monoubiquitinated at multiple sites within its nuclear localization signal (NLS) BY UBE2O, leading to cytoplasmic retention. Able to mediate autodeubiquitination via intramolecular interactions to counteract cytoplasmic retention. Monoubiquitinated on at least 4 sites near or within its PY-NLS. Highly expressed in mammary glands, testis and ovary. Up-regulated in mammary glands during puberty, pregnancy, and as a result of parity.

It localises to the cytoplasm. It is found in the nucleus. The protein localises to the chromosome. It catalyses the reaction Thiol-dependent hydrolysis of ester, thioester, amide, peptide and isopeptide bonds formed by the C-terminal Gly of ubiquitin (a 76-residue protein attached to proteins as an intracellular targeting signal).. Deubiquitinating enzyme that plays a key role in chromatin by mediating deubiquitination of histone H2A and HCFC1. Catalytic component of the polycomb repressive deubiquitinase (PR-DUB) complex, a complex that specifically mediates deubiquitination of histone H2A monoubiquitinated at 'Lys-120' (H2AK119ub1). Does not deubiquitinate monoubiquitinated histone H2B. The PR-DUB complex is an epigenetic regulator of gene expression and acts as a transcriptional coactivator, affecting genes involved in development, cell communication, signaling, cell proliferation and cell viability. Antagonizes PRC1 mediated H2AK119ub1 monoubiquitination. As part of the PR-DUB complex, associates with chromatin enriched in histone marks H3K4me1, H3K4me3, and H3K27Ac, but not in H3K27me3. Acts as a regulator of cell growth by mediating deubiquitination of HCFC1 N-terminal and C-terminal chains, with some specificity toward 'Lys-48'-linked polyubiquitin chains compared to 'Lys-63'-linked polyubiquitin chains. Deubiquitination of HCFC1 does not lead to increase stability of HCFC1. Interferes with the BRCA1 and BARD1 heterodimer activity by inhibiting their ability to mediate ubiquitination and autoubiquitination. It however does not mediate deubiquitination of BRCA1 and BARD1. Able to mediate autodeubiquitination via intramolecular interactions to counteract monoubiquitination at the nuclear localization signal (NLS), thereby protecting it from cytoplasmic sequestration. Negatively regulates epithelial-mesenchymal transition (EMT) of trophoblast stem cells during placental development by regulating genes involved in epithelial cell integrity, cell adhesion and cytoskeletal organization. The chain is Ubiquitin carboxyl-terminal hydrolase BAP1 (Bap1) from Mus musculus (Mouse).